The primary structure comprises 302 residues: Urease accessory protein UreG (302 aa).

3 stretches are compositionally biased toward basic and acidic residues: residues 1-32 (MHDP…DHVH), 40-56 (HEHE…EHGH), and 64-76 (HAHE…THEH). Residues 1-76 (MHDPGEHGHG…EHAHGHTHEH (76 aa)) are disordered. Residue 105–112 (GPVGSGKT) coordinates GTP.

Belongs to the SIMIBI class G3E GTPase family. UreG subfamily. Homodimer. UreD, UreF and UreG form a complex that acts as a GTP-hydrolysis-dependent molecular chaperone, activating the urease apoprotein by helping to assemble the nickel containing metallocenter of UreC. The UreE protein probably delivers the nickel.

The protein localises to the cytoplasm. Its function is as follows. Facilitates the functional incorporation of the urease nickel metallocenter. This process requires GTP hydrolysis, probably effectuated by UreG. The polypeptide is Urease accessory protein UreG (Sorangium cellulosum (strain So ce56) (Polyangium cellulosum (strain So ce56))).